Here is an 89-residue protein sequence, read N- to C-terminus: Small ribosomal subunit protein uS15 (89 aa).

This sequence belongs to the universal ribosomal protein uS15 family. As to quaternary structure, part of the 30S ribosomal subunit. Forms a bridge to the 50S subunit in the 70S ribosome, contacting the 23S rRNA.

In terms of biological role, one of the primary rRNA binding proteins, it binds directly to 16S rRNA where it helps nucleate assembly of the platform of the 30S subunit by binding and bridging several RNA helices of the 16S rRNA. Forms an intersubunit bridge (bridge B4) with the 23S rRNA of the 50S subunit in the ribosome. The polypeptide is Small ribosomal subunit protein uS15 (Nitrosospira multiformis (strain ATCC 25196 / NCIMB 11849 / C 71)).